A 329-amino-acid polypeptide reads, in one-letter code: Legumin type B (329 aa).

Disordered stretches follow at residues 47–79 (PETQEEQQERHQQKHSLPVGRRGGQHQQEEDGN) and 97–149 (EEDT…GRNG). Basic and acidic residues predominate over residues 99 to 112 (DTAKRLRSPRDKRN). Over residues 129–138 (QQEEEEEEEE) the composition is skewed to acidic residues. Residues 161-308 (ENIAQPARAD…AFGLRQRQVT (148 aa)) enclose the Cupin type-1 domain.

This sequence belongs to the 11S seed storage protein (globulins) family. In terms of assembly, hexamer; each subunit is composed of an acidic and a basic chain derived from a single precursor and linked by a disulfide bond.

Its function is as follows. This protein found in the seeds of many leguminous and non-leguminous plants is the source of sulfur-containing amino acids in seed meals. The chain is Legumin type B (LEB6) from Vicia faba (Broad bean).